The sequence spans 157 residues: SsrA-binding protein (157 aa).

Over residues 134-151 (HDKRETEKKRDWSKEKGR) the composition is skewed to basic and acidic residues. The disordered stretch occupies residues 134 to 157 (HDKRETEKKRDWSKEKGRLMRAKG).

This sequence belongs to the SmpB family.

It localises to the cytoplasm. Its function is as follows. Required for rescue of stalled ribosomes mediated by trans-translation. Binds to transfer-messenger RNA (tmRNA), required for stable association of tmRNA with ribosomes. tmRNA and SmpB together mimic tRNA shape, replacing the anticodon stem-loop with SmpB. tmRNA is encoded by the ssrA gene; the 2 termini fold to resemble tRNA(Ala) and it encodes a 'tag peptide', a short internal open reading frame. During trans-translation Ala-aminoacylated tmRNA acts like a tRNA, entering the A-site of stalled ribosomes, displacing the stalled mRNA. The ribosome then switches to translate the ORF on the tmRNA; the nascent peptide is terminated with the 'tag peptide' encoded by the tmRNA and targeted for degradation. The ribosome is freed to recommence translation, which seems to be the essential function of trans-translation. This chain is SsrA-binding protein, found in Rhodopseudomonas palustris (strain BisA53).